Consider the following 422-residue polypeptide: Serine hydroxymethyltransferase (422 aa).

(6S)-5,6,7,8-tetrahydrofolate-binding positions include leucine 118 and 122-124 (GHL). Lysine 227 carries the post-translational modification N6-(pyridoxal phosphate)lysine. (6S)-5,6,7,8-tetrahydrofolate is bound by residues glutamate 243 and 351-353 (SPF).

It belongs to the SHMT family. Homodimer. The cofactor is pyridoxal 5'-phosphate.

Its subcellular location is the cytoplasm. It carries out the reaction (6R)-5,10-methylene-5,6,7,8-tetrahydrofolate + glycine + H2O = (6S)-5,6,7,8-tetrahydrofolate + L-serine. It functions in the pathway one-carbon metabolism; tetrahydrofolate interconversion. Its pathway is amino-acid biosynthesis; glycine biosynthesis; glycine from L-serine: step 1/1. Functionally, catalyzes the reversible interconversion of serine and glycine with tetrahydrofolate (THF) serving as the one-carbon carrier. This reaction serves as the major source of one-carbon groups required for the biosynthesis of purines, thymidylate, methionine, and other important biomolecules. Also exhibits THF-independent aldolase activity toward beta-hydroxyamino acids, producing glycine and aldehydes, via a retro-aldol mechanism. This chain is Serine hydroxymethyltransferase, found in Kosmotoga olearia (strain ATCC BAA-1733 / DSM 21960 / TBF 19.5.1).